The primary structure comprises 314 residues: Fibrinogen-like protein 1 (314 aa).

Residues 1–22 (MGKIYSFVLVAIALMMGREGWA) form the signal peptide. Residues 28–62 (CLREQVRLRAQVHQLETRVKQQQTMIAQLLHEKEV) are a coiled coil. A Fibrinogen C-terminal domain is found at 76–308 (LGGKRQYADC…SVVMKIRPSD (233 aa)). Intrachain disulfides connect C85–C114 and C250–C263.

In terms of assembly, homodimer. Interacts (via the Fibrinogen C-terminal domain) with LAG3 (via Ig-like domains 1 and 2). In terms of tissue distribution, mainly expressed in liver. Also expressed in brown adipose tissue.

It localises to the secreted. Immune suppressive molecule that inhibits antigen-specific T-cell activation by acting as a major ligand of LAG3. Responsible for LAG3 T-cell inhibitory function. Binds LAG3 independently from MHC class II (MHC-II). Secreted by, and promotes growth of, hepatocytes. The chain is Fibrinogen-like protein 1 (Fgl1) from Mus musculus (Mouse).